A 379-amino-acid chain; its full sequence is Carbamoyl phosphate synthase small chain (379 aa).

The segment at 1–187 (MNFTPALLAL…GSGHAPAPAS (187 aa)) is CPSase. L-glutamine is bound by residues S48, G239, and G241. The region spanning 191 to 378 (KVVAYDFGVK…IELMKPQGVR (188 aa)) is the Glutamine amidotransferase type-1 domain. The active-site Nucleophile is C267. Positions 268, 271, 309, 311, and 312 each coordinate L-glutamine. Catalysis depends on residues H351 and E353.

It belongs to the CarA family. Composed of two chains; the small (or glutamine) chain promotes the hydrolysis of glutamine to ammonia, which is used by the large (or ammonia) chain to synthesize carbamoyl phosphate. Tetramer of heterodimers (alpha,beta)4.

The enzyme catalyses hydrogencarbonate + L-glutamine + 2 ATP + H2O = carbamoyl phosphate + L-glutamate + 2 ADP + phosphate + 2 H(+). It catalyses the reaction L-glutamine + H2O = L-glutamate + NH4(+). It participates in amino-acid biosynthesis; L-arginine biosynthesis; carbamoyl phosphate from bicarbonate: step 1/1. The protein operates within pyrimidine metabolism; UMP biosynthesis via de novo pathway; (S)-dihydroorotate from bicarbonate: step 1/3. Functionally, small subunit of the glutamine-dependent carbamoyl phosphate synthetase (CPSase). CPSase catalyzes the formation of carbamoyl phosphate from the ammonia moiety of glutamine, carbonate, and phosphate donated by ATP, constituting the first step of 2 biosynthetic pathways, one leading to arginine and/or urea and the other to pyrimidine nucleotides. The small subunit (glutamine amidotransferase) binds and cleaves glutamine to supply the large subunit with the substrate ammonia. The polypeptide is Carbamoyl phosphate synthase small chain (Thioalkalivibrio sulfidiphilus (strain HL-EbGR7)).